A 97-amino-acid polypeptide reads, in one-letter code: Aspartyl/glutamyl-tRNA(Asn/Gln) amidotransferase subunit C (97 aa).

This sequence belongs to the GatC family. As to quaternary structure, heterotrimer of A, B and C subunits.

It carries out the reaction L-glutamyl-tRNA(Gln) + L-glutamine + ATP + H2O = L-glutaminyl-tRNA(Gln) + L-glutamate + ADP + phosphate + H(+). The enzyme catalyses L-aspartyl-tRNA(Asn) + L-glutamine + ATP + H2O = L-asparaginyl-tRNA(Asn) + L-glutamate + ADP + phosphate + 2 H(+). In terms of biological role, allows the formation of correctly charged Asn-tRNA(Asn) or Gln-tRNA(Gln) through the transamidation of misacylated Asp-tRNA(Asn) or Glu-tRNA(Gln) in organisms which lack either or both of asparaginyl-tRNA or glutaminyl-tRNA synthetases. The reaction takes place in the presence of glutamine and ATP through an activated phospho-Asp-tRNA(Asn) or phospho-Glu-tRNA(Gln). The protein is Aspartyl/glutamyl-tRNA(Asn/Gln) amidotransferase subunit C of Prochlorococcus marinus (strain MIT 9515).